The primary structure comprises 544 residues: Chaperonin GroEL (544 aa).

ATP is bound by residues 30-33, Lys51, 87-91, Gly415, 479-481, and Asp495; these read TLGP, DGTTT, and NAA.

This sequence belongs to the chaperonin (HSP60) family. As to quaternary structure, forms a cylinder of 14 subunits composed of two heptameric rings stacked back-to-back. Interacts with the co-chaperonin GroES.

The protein resides in the cytoplasm. The catalysed reaction is ATP + H2O + a folded polypeptide = ADP + phosphate + an unfolded polypeptide.. Together with its co-chaperonin GroES, plays an essential role in assisting protein folding. The GroEL-GroES system forms a nano-cage that allows encapsulation of the non-native substrate proteins and provides a physical environment optimized to promote and accelerate protein folding. In Francisella tularensis subsp. tularensis (strain SCHU S4 / Schu 4), this protein is Chaperonin GroEL.